Consider the following 519-residue polypeptide: Cilia- and flagella-associated protein 53 (519 aa).

2 coiled-coil regions span residues 80-107 and 210-339; these read NRHL…LLES and LAKE…QEEQ. Positions 498–519 are disordered; sequence TTAVHPFRRRDRRCSSSGGQMS.

This sequence belongs to the CFAP53 family.

It localises to the cytoplasm. The protein resides in the cytoskeleton. Its subcellular location is the cilium axoneme. It is found in the cilium basal body. Its function is as follows. Microtubule inner protein (MIP) part of the dynein-decorated doublet microtubules (DMTs) in cilia axoneme, which is required for motile cilia beating. Regulates motility patterns of both 9+0 and 9+2 motile cilia through differential localization and recruitment of axonemal dynein components. Required for cilium motility within the spinal canal and Kuppfer's vesicle and is involved in the establishment of left-right symmetry during embryogenesis. In Danio rerio (Zebrafish), this protein is Cilia- and flagella-associated protein 53.